The sequence spans 158 residues: AP-1 complex subunit sigma-1A (158 aa).

The residue at position 147 (S147) is a Phosphoserine.

This sequence belongs to the adaptor complexes small subunit family. As to quaternary structure, adaptor protein complex 1 (AP-1) is a heterotetramer composed of two large adaptins (gamma-type subunit AP1G1 and beta-type subunit AP1B1), a medium adaptin (mu-type subunit AP1M1 or AP1M2) and a small adaptin (sigma-type subunit AP1S1 or AP1S2 or AP1S3). In terms of tissue distribution, widely expressed.

It is found in the golgi apparatus. The protein resides in the cytoplasmic vesicle membrane. It localises to the membrane. Its subcellular location is the clathrin-coated pit. Its function is as follows. Subunit of clathrin-associated adaptor protein complex 1 that plays a role in protein sorting in the late-Golgi/trans-Golgi network (TGN) and/or endosomes. The AP complexes mediate both the recruitment of clathrin to membranes and the recognition of sorting signals within the cytosolic tails of transmembrane cargo molecules. The sequence is that of AP-1 complex subunit sigma-1A (AP1S1) from Homo sapiens (Human).